Here is a 358-residue protein sequence, read N- to C-terminus: Homoserine O-succinyltransferase (358 aa).

The Acyl-thioester intermediate role is filled by Cys146. Residues Lys167 and Ser196 each contribute to the substrate site. The Proton acceptor role is filled by His239. Residue Glu241 is part of the active site. Residue Arg253 coordinates substrate.

It belongs to the MetA family.

It localises to the cytoplasm. The enzyme catalyses L-homoserine + succinyl-CoA = O-succinyl-L-homoserine + CoA. It participates in amino-acid biosynthesis; L-methionine biosynthesis via de novo pathway; O-succinyl-L-homoserine from L-homoserine: step 1/1. Functionally, transfers a succinyl group from succinyl-CoA to L-homoserine, forming succinyl-L-homoserine. The chain is Homoserine O-succinyltransferase from Nitrosococcus oceani (strain ATCC 19707 / BCRC 17464 / JCM 30415 / NCIMB 11848 / C-107).